The primary structure comprises 234 residues: tRNA1(Val) (adenine(37)-N6)-methyltransferase (234 aa).

Belongs to the methyltransferase superfamily. tRNA (adenine-N(6)-)-methyltransferase family.

It localises to the cytoplasm. It catalyses the reaction adenosine(37) in tRNA1(Val) + S-adenosyl-L-methionine = N(6)-methyladenosine(37) in tRNA1(Val) + S-adenosyl-L-homocysteine + H(+). Specifically methylates the adenine in position 37 of tRNA(1)(Val) (anticodon cmo5UAC). In Flavobacterium psychrophilum (strain ATCC 49511 / DSM 21280 / CIP 103535 / JIP02/86), this protein is tRNA1(Val) (adenine(37)-N6)-methyltransferase.